We begin with the raw amino-acid sequence, 896 residues long: MPQKTKDTPMMRQYFAVKNQYPDAFLFYRLGDFYEMFFDDAIKGAQLLELTLTTRNHSAENPIPMCGVPHRAVQNYIDILVDKGYKVAICEQMEDPKLAKGMVKREVIQLVTPGTTLERGAEQAKTNNYLTALIQRDQQYGFAYADLSTGELKTSVLTTNDTLINELTSLQTKEIVVDDSVASDLRDQIKTLGILISEQNNVTPQAQLSYLTQDLTVDLEQQVVERLLMYITVTQKRSLAHLQKAIAYEPSYFLKLDHNSKYNLELMKSIRTGKKQGTLLWLLDETKTAMGGRLLKQWIDRPLIVKADIETRQNKVATLLDHYFERSNLQEELTKVYDLERLAGRVAFGSVNGRDLVQLKTSLRQIPKIRYILSELDTQVFNDEVNQLDPVEDVADLIDAAIVEDAPLSVTDGGVIKDGYNEQLDQYRDAMNNGKKWIAELEAQERATTGIKNLKIGFNRVFGYYIEVTKANLAQLPKDRYERKQTLTNAERFSTPELKSHESLILEAESHSTDLEYQLFTKVRETVKKAIQRLQTLAKAVAAIDVLQSFAVVSEDYHFVRPKLTKSHDLKIVDGRHPVVEKVMGNQSYVPNNVTMSPDETVLLITGPNMSGKSTYMRQLALTVIMAQIGCFVPAKSAQLPIFDQIFTRIGATDDLISGQSTFMVEMQEANNALQHATANSLVLFDEIGRGTATYDGMALAQAIIEFVHNHIHAKTLFSTHYHELTALDQELSGLRNVHVGATEQDGELVFLHKVEPGAADKSYGVHVAKLAGMPTSLLERANKILTSLENQTSTVSTTAASIAASDAANSVAPNTAASMPVEAADESQPVESETPVAEAPVAEAGDEQLSLFAEPAVTDAKGEKVLQQLKTLNLMAMTPMDVMNQLYKWQQKLGK.

607–614 (GPNMSGKS) contributes to the ATP binding site. Residues 809 to 835 (ANSVAPNTAASMPVEAADESQPVESET) are disordered.

Belongs to the DNA mismatch repair MutS family.

Its function is as follows. This protein is involved in the repair of mismatches in DNA. It is possible that it carries out the mismatch recognition step. This protein has a weak ATPase activity. This is DNA mismatch repair protein MutS from Lactiplantibacillus plantarum (strain ATCC BAA-793 / NCIMB 8826 / WCFS1) (Lactobacillus plantarum).